We begin with the raw amino-acid sequence, 219 residues long: Orotate phosphoribosyltransferase (219 aa).

Residue Lys-26 participates in 5-phospho-alpha-D-ribose 1-diphosphate binding. 34 to 35 (FF) serves as a coordination point for orotate. 5-phospho-alpha-D-ribose 1-diphosphate is bound by residues 72–73 (YK), Arg-98, Lys-99, Lys-102, His-104, and 124–132 (DDVITAGTA). Orotate is bound by residues Thr-128 and Arg-156.

This sequence belongs to the purine/pyrimidine phosphoribosyltransferase family. PyrE subfamily. In terms of assembly, homodimer. Mg(2+) is required as a cofactor.

The enzyme catalyses orotidine 5'-phosphate + diphosphate = orotate + 5-phospho-alpha-D-ribose 1-diphosphate. Its pathway is pyrimidine metabolism; UMP biosynthesis via de novo pathway; UMP from orotate: step 1/2. Functionally, catalyzes the transfer of a ribosyl phosphate group from 5-phosphoribose 1-diphosphate to orotate, leading to the formation of orotidine monophosphate (OMP). In Xanthomonas euvesicatoria pv. vesicatoria (strain 85-10) (Xanthomonas campestris pv. vesicatoria), this protein is Orotate phosphoribosyltransferase.